Here is a 203-residue protein sequence, read N- to C-terminus: Glycerol-3-phosphate acyltransferase (203 aa).

The Periplasmic portion of the chain corresponds to 1-3 (MSA). The helical transmembrane segment at 4–24 (IAPGMILFAYLCGSISSAILV) threads the bilayer. Residues 25-52 (CRIAGLPDPRESGSGNPGATNVLRIGGK) lie on the Cytoplasmic side of the membrane. A helical membrane pass occupies residues 53-73 (GAAVAVLIFDILKGMLPVWGA). At 74 to 80 (YALGVTP) the chain is on the periplasmic side. A helical membrane pass occupies residues 81–101 (FWLGLIAIAACLGHIWPVFFG). Over 102–111 (FKGGKGVATA) the chain is Cytoplasmic. The helical transmembrane segment at 112–132 (FGAIAPIGWDLTGVMAGTWLL) threads the bilayer. The Periplasmic portion of the chain corresponds to 133–137 (TVLLS). A helical transmembrane segment spans residues 138 to 158 (GYSSLGAIVSALIAPFYVWWF). Topologically, residues 159–203 (KPQFTFPVSMLSCLILLRHHDNIQRLWRRQETKIWTKLKKKRQKD) are cytoplasmic.

Belongs to the PlsY family. As to quaternary structure, probably interacts with PlsX.

It is found in the cell inner membrane. It catalyses the reaction sn-glycerol 3-phosphate + an acyl-CoA = a 1-acyl-sn-glycero-3-phosphate + CoA. It carries out the reaction a fatty acyl-[ACP] + sn-glycerol 3-phosphate = a 1-acyl-sn-glycero-3-phosphate + holo-[ACP]. It participates in lipid metabolism; phospholipid metabolism. In terms of biological role, catalyzes the transfer of an acyl group from acyl-ACP to glycerol-3-phosphate (G3P) to form lysophosphatidic acid (LPA). This enzyme can also utilize acyl-CoA as fatty acyl donor, but not acyl-PO(4). This Salmonella agona (strain SL483) protein is Glycerol-3-phosphate acyltransferase.